Here is a 985-residue protein sequence, read N- to C-terminus: Disease resistance protein At4g27190 (985 aa).

Residues 24–88 (ANAIKFKSNV…ISKARLKLEE (65 aa)) adopt a coiled-coil conformation. Residues 167 to 429 (IGVWGMGGVG…MAEGFMEELG (263 aa)) enclose the NB-ARC domain. Residue 171–178 (GMGGVGKT) coordinates ATP. LRR repeat units lie at residues 502–523 (SLRRVSLMNNKLESLPDLVEEF), 526–547 (KTSVLLLQGNFLLKEVPIGFLQ), 551–572 (TLRILNLSGTRIKSFPSCSLLR), 575–597 (SLHSLFLRDCFKLVKLPSLETLA), 598–620 (KLELLDLCGTHILEFPRGLEELK), and 621–643 (RFRHLDLSRTLHLESIPARVVSR).

Belongs to the disease resistance NB-LRR family.

Disease resistance protein. The sequence is that of Disease resistance protein At4g27190 from Arabidopsis thaliana (Mouse-ear cress).